Consider the following 1000-residue polypeptide: Isoleucine--tRNA ligase, mitochondrial (1000 aa).

A mitochondrion-targeting transit peptide spans 1–27; the sequence is MLGAWRAAPRLRLRARFGVASVWARSA. The 'HIGH' region motif lies at 102-112; it reads PYANGDPHVGH. The ATP site is built by K649 and K652. Residues 649–653 carry the 'KMSKS' region motif; sequence KMSKS.

Belongs to the class-I aminoacyl-tRNA synthetase family.

It is found in the mitochondrion matrix. It carries out the reaction tRNA(Ile) + L-isoleucine + ATP = L-isoleucyl-tRNA(Ile) + AMP + diphosphate. Its function is as follows. Aminoacyl-tRNA synthetase that catalyzes the specific attachment of isoleucine to its cognate tRNA (tRNA(Ile)). In Gallus gallus (Chicken), this protein is Isoleucine--tRNA ligase, mitochondrial (IARS2).